Here is a 433-residue protein sequence, read N- to C-terminus: Legumain (433 aa).

The first 17 residues, 1 to 17 (MVWKVAVFLSAALVIGA), serve as a signal peptide directing secretion. Asn-91 carries an N-linked (GlcNAc...) asparagine glycan. His-148 is an active-site residue. An N-linked (GlcNAc...) asparagine glycan is attached at Asn-167. Cys-189 serves as the catalytic Nucleophile. 2 N-linked (GlcNAc...) asparagine glycosylation sites follow: Asn-263 and Asn-272. Residues 324-433 (DLEESRQLTE…SMDHVCLGHY (110 aa)) constitute a propeptide that is removed on maturation. 2 disulfides stabilise this stretch: Cys-378-Cys-412 and Cys-390-Cys-429.

It belongs to the peptidase C13 family. In terms of assembly, homodimer before autocatalytic removal of the propeptide. Monomer after autocatalytic processing. May interact with integrins. In terms of processing, activated by autocatalytic processing at pH 4.

Its subcellular location is the lysosome. It carries out the reaction Hydrolysis of proteins and small molecule substrates at -Asn-|-Xaa- bonds.. In terms of biological role, has a strict specificity for hydrolysis of asparaginyl bonds. Can also cleave aspartyl bonds slowly, especially under acidic conditions. Involved in the processing of proteins for MHC class II antigen presentation in the lysosomal/endosomal system. Also involved in MHC class I antigen presentation in cross-presenting dendritic cells by mediating cleavage and maturation of Perforin-2 (MPEG1), thereby promoting antigen translocation in the cytosol. Required for normal lysosomal protein degradation in renal proximal tubules. Required for normal degradation of internalized EGFR. Plays a role in the regulation of cell proliferation via its role in EGFR degradation. The sequence is that of Legumain (LGMN) from Pongo abelii (Sumatran orangutan).